Consider the following 770-residue polypeptide: Low-density lipoprotein receptor-related protein 3 (770 aa).

An N-terminal signal peptide occupies residues 1-36 (MEKRAAAGPEGAPGARAPLAVVCLVNLFLTGRLSSA). Topologically, residues 37-496 (VPALAACSGK…HGCLAAVPRK (460 aa)) are extracellular. Disulfide bonds link Cys43-Cys72, Cys99-Cys120, Cys166-Cys178, Cys173-Cys191, Cys185-Cys200, Cys212-Cys227, Cys219-Cys240, Cys234-Cys249, and Cys254-Cys282. The CUB 1 domain occupies 43-159 (CSGKLEQHTE…QGFRLSYIRG (117 aa)). N-linked (GlcNAc...) asparagine glycosylation occurs at Asn71. 2 consecutive LDL-receptor class A domains span residues 165–201 (SCQT…GNCS) and 211–250 (LCPG…AGCP). The N-linked (GlcNAc...) asparagine glycan is linked to Asn199. The region spanning 254–365 (CGRRLGSFYG…HGFNATYQVK (112 aa)) is the CUB 2 domain. Residue Asn359 is glycosylated (N-linked (GlcNAc...) asparagine). 2 consecutive LDL-receptor class A domains span residues 415–453 (ACPP…KNCF) and 454–490 (SCQP…HGCL). Disulfide bonds link Cys416–Cys430, Cys423–Cys443, Cys437–Cys452, Cys455–Cys467, Cys462–Cys480, and Cys474–Cys489. The chain crosses the membrane as a helical span at residues 497-517 (VITAALIGSLVCGLLLVIALG). Topologically, residues 518 to 770 (CAFKLYSLRT…ASDDEALLVC (253 aa)) are cytoplasmic. The interval 639 to 753 (LLQAAPGPVP…PLGVCRSPPP (115 aa)) is disordered. Residues 689–703 (RDPEYRPEDKERKAC) are compositionally biased toward basic and acidic residues.

It belongs to the LDLR family. As to quaternary structure, binds GGA1 and GGA2.

It localises to the membrane. Its subcellular location is the coated pit. In terms of biological role, probable receptor, which may be involved in the internalization of lipophilic molecules and/or signal transduction. Its precise role is however unclear, since it does not bind to very low density lipoprotein (VLDL) or to LRPAP1 in vitro. This Rattus norvegicus (Rat) protein is Low-density lipoprotein receptor-related protein 3 (Lrp3).